The primary structure comprises 1420 residues: Apolipoprotein(a) (1420 aa).

Residues 19–30 (TAVAPPNVTPVP) are compositionally biased toward low complexity. A disordered region spans residues 19–46 (TAVAPPNVTPVPSLEAPSEQAPTEQRPG). Kringle domains lie at 49–127 (ECYH…LTQC), 163–241 (ECYH…LTQC), 277–355 (ECYH…LTQC), 391–469 (ECYH…LTRC), and 505–583 (ECYY…LTQC). Disulfide bonds link C50-C127, C71-C110, C99-C122, C164-C241, C185-C224, C213-C236, C278-C355, C299-C338, C327-C350, C392-C469, C413-C452, C441-C464, C506-C583, C527-C566, and C555-C578. Positions 598 to 617 (PDPSTQASSEEAPTEQSPEV) are disordered. Over residues 600–616 (PSTQASSEEAPTEQSPE) the composition is skewed to polar residues. Kringle domains follow at residues 619-697 (DCYH…LTQC), 725-803 (DCYH…LTQC), 839-917 (DCYQ…LTQC), 953-1031 (DCYH…LTQC), and 1067-1145 (QCYH…LTRC). 19 cysteine pairs are disulfide-bonded: C620/C697, C641/C680, C669/C692, C726/C803, C747/C786, C775/C798, C840/C917, C861/C900, C889/C912, C954/C1031, C975/C1014, C1003/C1026, C1068/C1145, C1089/C1128, C1117/C1140, C1217/C1233, C1309/C1376, C1339/C1355, and C1366/C1394. The Peptidase S1 domain occupies 1191-1418 (IVGGCVAHPH…FVTWIEGVMR (228 aa)).

Belongs to the peptidase S1 family. Plasminogen subfamily. Disulfide-linked to apo-B100. Binds to fibronectin and decorin. N- and O-glycosylated.

Its function is as follows. Apo(a) is the main constituent of lipoprotein(a) (Lp(a)). It has serine proteinase activity and is able of autoproteolysis. Inhibits tissue-type plasminogen activator 1. Lp(a) may be a ligand for megalin/Gp 330. The polypeptide is Apolipoprotein(a) (LPA) (Macaca mulatta (Rhesus macaque)).